The sequence spans 230 residues: MKITKNILKAEFIKRPNRFQAYVKINEKIEMVHVPNTGRCKEILIPGSTVILREENNENRKTRYDLIAGYKGDMLISIDSQIPNKVVYEALMNFKIEILKEYTNIKREKTFGKSRFDFKLEKENGEVYYLEVKGVTLENDGLTMFPDAPTERGTKHILELIDVKNKGMGAGVLFLIQLNGVKKFTPNHKMDKNFGEALKLAKEKGVDILAYDCLVEESSISLNNPVSIEI.

Belongs to the SfsA family.

This Clostridium botulinum (strain Okra / Type B1) protein is Sugar fermentation stimulation protein homolog.